The primary structure comprises 278 residues: Putative protein-disulfide oxidoreductase RF_0032 (278 aa).

A signal peptide spans 1–18 (MRSIFIVPIFLLFLSSCS). The segment at 62–84 (VPANDNNQTDEVSTPPSQEQKNP) is disordered. Over residues 65 to 81 (NDNNQTDEVSTPPSQEQ) the composition is skewed to polar residues. The 190-residue stretch at 77-266 (PSQEQKNPEI…ISTAVDKALE (190 aa)) folds into the Thioredoxin domain. Cys119 and Cys122 are oxidised to a cystine.

This sequence belongs to the thioredoxin family. DsbA subfamily.

The protein localises to the periplasm. In terms of biological role, may be required for disulfide bond formation in some proteins. This chain is Putative protein-disulfide oxidoreductase RF_0032, found in Rickettsia felis (strain ATCC VR-1525 / URRWXCal2) (Rickettsia azadi).